A 531-amino-acid chain; its full sequence is uncharacterized protein (531 aa).

Residues 1 to 22 (MRLQFKLLGFLTLLGTSTILSA) form the signal peptide. Cysteine 23 is lipidated: N-palmitoyl cysteine. The S-diacylglycerol cysteine moiety is linked to residue cysteine 23. Residues 31-51 (EPNNIEESGPITPTTPTTDVP) form a disordered region. The span at 40 to 51 (PITPTTPTTDVP) shows a compositional bias: low complexity.

Belongs to the MG067/MG068/MG395 family.

The protein resides in the cell membrane. This is an uncharacterized protein from Mycoplasma pneumoniae (strain ATCC 29342 / M129 / Subtype 1) (Mycoplasmoides pneumoniae).